Here is a 359-residue protein sequence, read N- to C-terminus: MTTTLQQRSGASSWQAFCEWVTSTNNRLYVGWFGVLMIPTLLAATICFVIAFVAAPPVDIDGIREPVAGSLIYGNNIISGAVVPSSNAIGLHFYPIWEAASLDEWLYNGGPFQLVVFHFLIGIYAYMGREWELSYRLGMRPWICVAYSAPVAAASAVFLVYPFGQGSFSDAMPLGISGTFNYMLVFQAEHNILMHPFHMLGVAGVFGGSLFSAMHGSLVTSSLVRETTETESQNYGYKFGQEEETYNIVAAHGYFGRLIFQYASFNNSRSLHFFLAAWPVVGIWFTALGVSTMAFNLNGFNFNQSILDGQGRVLNTWADVLNRAGLGMEVMHERNAHNFPLDLAAAESTPVALQVPAIG.

A run of 3 helical transmembrane segments spans residues 29 to 46 (YVGW…AATI), 118 to 133 (HFLI…EWEL), and 142 to 156 (WICV…AASA). His118 contributes to the chlorophyll a binding site. Tyr126 is a pheophytin a binding site. The [CaMn4O5] cluster site is built by Asp170 and Glu189. A helical membrane pass occupies residues 197–218 (FHMLGVAGVFGGSLFSAMHGSL). His198 contributes to the chlorophyll a binding site. A quinone is bound by residues His215 and 264–265 (SF). His215 provides a ligand contact to Fe cation. His272 contributes to the Fe cation binding site. A helical membrane pass occupies residues 274-288 (FLAAWPVVGIWFTAL). [CaMn4O5] cluster-binding residues include His332, Glu333, Asp342, and Ala344. Positions 345–359 (AAESTPVALQVPAIG) are excised as a propeptide.

This sequence belongs to the reaction center PufL/M/PsbA/D family. In terms of assembly, PSII is composed of 1 copy each of membrane proteins PsbA, PsbB, PsbC, PsbD, PsbE, PsbF, PsbH, PsbI, PsbJ, PsbK, PsbL, PsbM, PsbT, PsbX, PsbY, PsbZ, Psb30/Ycf12, peripheral proteins PsbO, CyanoQ (PsbQ), PsbU, PsbV and a large number of cofactors. It forms dimeric complexes. The D1/D2 heterodimer binds P680, chlorophylls that are the primary electron donor of PSII, and subsequent electron acceptors. It shares a non-heme iron and each subunit binds pheophytin, quinone, additional chlorophylls, carotenoids and lipids. D1 provides most of the ligands for the Mn4-Ca-O5 cluster of the oxygen-evolving complex (OEC). There is also a Cl(-1) ion associated with D1 and D2, which is required for oxygen evolution. The PSII complex binds additional chlorophylls, carotenoids and specific lipids. is required as a cofactor. Tyr-161 forms a radical intermediate that is referred to as redox-active TyrZ, YZ or Y-Z. Post-translationally, C-terminally processed by CtpA; processing is essential to allow assembly of the oxygen-evolving complex and thus photosynthetic growth.

The protein localises to the cellular thylakoid membrane. The catalysed reaction is 2 a plastoquinone + 4 hnu + 2 H2O = 2 a plastoquinol + O2. Its function is as follows. Photosystem II (PSII) is a light-driven water:plastoquinone oxidoreductase that uses light energy to abstract electrons from H(2)O, generating O(2) and a proton gradient subsequently used for ATP formation. It consists of a core antenna complex that captures photons, and an electron transfer chain that converts photonic excitation into a charge separation. The D1/D2 (PsbA/PsbD) reaction center heterodimer binds P680, the primary electron donor of PSII as well as several subsequent electron acceptors. This chain is Photosystem II protein D1 3, found in Parasynechococcus marenigrum (strain WH8102).